Here is a 399-residue protein sequence, read N- to C-terminus: Subtilisin-like protease 4 (399 aa).

The signal sequence occupies residues 1–19 (MVCLKTLSVFLAAFAAADA). A propeptide spanning residues 20-118 (RAVFKTQGHK…VEQDQVVRIS (99 aa)) is cleaved from the precursor. The 80-residue stretch at 38-117 (YIVVMKDGVS…YVEQDQVVRI (80 aa)) folds into the Inhibitor I9 domain. Asn-102 is a glycosylation site (N-linked (GlcNAc...) asparagine). Residues 128–399 (SWGLGRVSHR…NRLLYNGSGQ (272 aa)) enclose the Peptidase S8 domain. Catalysis depends on charge relay system residues Asp-160 and His-191. 2 N-linked (GlcNAc...) asparagine glycosylation sites follow: Asn-252 and Asn-308. Catalysis depends on Ser-346, which acts as the Charge relay system. N-linked (GlcNAc...) asparagine glycosylation occurs at Asn-395.

It belongs to the peptidase S8 family.

It is found in the secreted. Secreted subtilisin-like serine protease with keratinolytic activity that contributes to pathogenicity. The protein is Subtilisin-like protease 4 (SUB4) of Trichophyton rubrum (Athlete's foot fungus).